The following is a 235-amino-acid chain: Uridylate kinase (235 aa).

ATP is bound at residue 9-12 (KLSG). Position 51 (Gly-51) interacts with UMP. Residues Gly-52 and Arg-56 each contribute to the ATP site. UMP contacts are provided by residues Asp-71 and 133 to 140 (SGNPFFTT). Thr-160, Tyr-166, and Asp-169 together coordinate ATP.

It belongs to the UMP kinase family. Homohexamer.

It localises to the cytoplasm. It catalyses the reaction UMP + ATP = UDP + ADP. It participates in pyrimidine metabolism; CTP biosynthesis via de novo pathway; UDP from UMP (UMPK route): step 1/1. Inhibited by UTP. Functionally, catalyzes the reversible phosphorylation of UMP to UDP. In Gloeobacter violaceus (strain ATCC 29082 / PCC 7421), this protein is Uridylate kinase.